The sequence spans 123 residues: Methicillin resistance regulatory protein MecI (123 aa).

Positions 7-71 form a DNA-binding region, H-T-H motif; it reads EISSAEWEVM…KDNKIFQYYS (65 aa). The interval 74–123 is important for dimerization; sequence EESDIKYKTSKNFINKVYKGGFNSLVLNFVEKEDLSQDEIEELRNILNKK.

The protein belongs to the BlaI transcriptional regulatory family. As to quaternary structure, monomer and homodimer. Upon exposure to beta-lactams, proteolytic cleavage at a single site impairs dimerization and abolishes repressor activity.

Its subcellular location is the cytoplasm. Transcriptional repressor that constitutively blocks the transcription of the gene for the penicillin-binding protein MecA. Binds palindromic DNA with the sequence 5'-TACA-[AT]-N-TGTA-3'. Regulates genes involved in antibiotic resistance. Binds DNA as a dimer. In Staphylococcus aureus (strain N315), this protein is Methicillin resistance regulatory protein MecI (mecI).